The sequence spans 569 residues: Proton-coupled zinc antiporter SLC30A9, mitochondrial (569 aa).

The N-terminal 68 residues, 1–68 (MLPGLAAAAA…IGTLSQVKLY (68 aa)), are a transit peptide targeting the mitochondrion. Helical transmembrane passes span 240-260 (VVMV…LAWI), 315-335 (GVGI…MGLL), 343-363 (LLWA…TLLV), 393-413 (VILL…TCMG), and 425-445 (SLGS…LIYT). The short motif at 463–467 (LTELL) is the LXXLL motif element.

It belongs to the cation diffusion facilitator (CDF) transporter (TC 2.A.4) family. SLC30A subfamily. In terms of assembly, interacts with GRIP1, ESR1, AR and CTNNB1.

The protein localises to the mitochondrion membrane. It localises to the nucleus. The protein resides in the endoplasmic reticulum. The catalysed reaction is Zn(2+)(in) + 2 H(+)(out) = Zn(2+)(out) + 2 H(+)(in). Its function is as follows. Mitochondrial proton-coupled zinc ion antiporter mediating the export of zinc from the mitochondria and involved in zinc homeostasis, zinc mobilization as well as mitochondrial morphology and health. In nucleus, functions as a secondary coactivator for nuclear receptors by cooperating with p160 coactivators subtypes. Plays a role in transcriptional activation of Wnt-responsive genes. This chain is Proton-coupled zinc antiporter SLC30A9, mitochondrial (SLC30A9), found in Pongo abelii (Sumatran orangutan).